A 122-amino-acid polypeptide reads, in one-letter code: Large ribosomal subunit protein uL14 (122 aa).

It belongs to the universal ribosomal protein uL14 family. As to quaternary structure, part of the 50S ribosomal subunit. Forms a cluster with proteins L3 and L19. In the 70S ribosome, L14 and L19 interact and together make contacts with the 16S rRNA in bridges B5 and B8.

Its function is as follows. Binds to 23S rRNA. Forms part of two intersubunit bridges in the 70S ribosome. In Desulfovibrio desulfuricans (strain ATCC 27774 / DSM 6949 / MB), this protein is Large ribosomal subunit protein uL14.